Here is a 293-residue protein sequence, read N- to C-terminus: Glutamyl-Q tRNA(Asp) synthetase (293 aa).

Residues 8-12 and Glu44 each bind L-glutamate; that span reads RFAPT. The short motif at 11–21 is the 'HIGH' region element; it reads PTPSGYLHFGS. Zn(2+)-binding residues include Cys100, Cys102, Tyr114, and Cys118. 2 residues coordinate L-glutamate: Tyr171 and Arg189. Residues 227–231 carry the 'KMSKS' region motif; that stretch reads KLGKS. Lys230 contacts ATP.

This sequence belongs to the class-I aminoacyl-tRNA synthetase family. GluQ subfamily. It depends on Zn(2+) as a cofactor.

Its function is as follows. Catalyzes the tRNA-independent activation of glutamate in presence of ATP and the subsequent transfer of glutamate onto a tRNA(Asp). Glutamate is transferred on the 2-amino-5-(4,5-dihydroxy-2-cyclopenten-1-yl) moiety of the queuosine in the wobble position of the QUC anticodon. This Pseudomonas aeruginosa (strain ATCC 15692 / DSM 22644 / CIP 104116 / JCM 14847 / LMG 12228 / 1C / PRS 101 / PAO1) protein is Glutamyl-Q tRNA(Asp) synthetase.